A 306-amino-acid polypeptide reads, in one-letter code: UDP-3-O-acyl-N-acetylglucosamine deacetylase (306 aa).

The Zn(2+) site is built by H79, H238, and D242. Catalysis depends on H265, which acts as the Proton donor.

The protein belongs to the LpxC family. It depends on Zn(2+) as a cofactor.

It catalyses the reaction a UDP-3-O-[(3R)-3-hydroxyacyl]-N-acetyl-alpha-D-glucosamine + H2O = a UDP-3-O-[(3R)-3-hydroxyacyl]-alpha-D-glucosamine + acetate. It participates in glycolipid biosynthesis; lipid IV(A) biosynthesis; lipid IV(A) from (3R)-3-hydroxytetradecanoyl-[acyl-carrier-protein] and UDP-N-acetyl-alpha-D-glucosamine: step 2/6. Functionally, catalyzes the hydrolysis of UDP-3-O-myristoyl-N-acetylglucosamine to form UDP-3-O-myristoylglucosamine and acetate, the committed step in lipid A biosynthesis. This chain is UDP-3-O-acyl-N-acetylglucosamine deacetylase, found in Hamiltonella defensa subsp. Acyrthosiphon pisum (strain 5AT).